Consider the following 107-residue polypeptide: U1-lycotoxin-Ls1t (107 aa).

An N-terminal signal peptide occupies residues 1 to 20; sequence MMKVLVVVALLVTLISYSSS. Residues 21–41 constitute a propeptide that is removed on maturation; sequence EGIDDLEADELLSLMANEQTR. Intrachain disulfides connect cysteine 44-cysteine 59, cysteine 51-cysteine 68, cysteine 58-cysteine 86, and cysteine 70-cysteine 84.

It belongs to the neurotoxin 19 (CSTX) family. 04 (U1-Lctx) subfamily. As to expression, expressed by the venom gland.

It is found in the secreted. In Lycosa singoriensis (Wolf spider), this protein is U1-lycotoxin-Ls1t.